A 936-amino-acid chain; its full sequence is Protein translocase subunit SecA (936 aa).

Residues Gln87, 105–109, and Asp515 contribute to the ATP site; that span reads GEGKT. Residues Cys920, Cys922, Cys931, and His932 each coordinate Zn(2+).

This sequence belongs to the SecA family. As to quaternary structure, monomer and homodimer. Part of the essential Sec protein translocation apparatus which comprises SecA, SecYEG and auxiliary proteins SecDF-YajC and YidC. Requires Zn(2+) as cofactor.

The protein localises to the cell inner membrane. Its subcellular location is the cytoplasm. It carries out the reaction ATP + H2O + cellular proteinSide 1 = ADP + phosphate + cellular proteinSide 2.. In terms of biological role, part of the Sec protein translocase complex. Interacts with the SecYEG preprotein conducting channel. Has a central role in coupling the hydrolysis of ATP to the transfer of proteins into and across the cell membrane, serving both as a receptor for the preprotein-SecB complex and as an ATP-driven molecular motor driving the stepwise translocation of polypeptide chains across the membrane. The chain is Protein translocase subunit SecA from Paraburkholderia phymatum (strain DSM 17167 / CIP 108236 / LMG 21445 / STM815) (Burkholderia phymatum).